Here is a 358-residue protein sequence, read N- to C-terminus: MITTTGLTKVYQSRDREVTALDGVDLHVREGEVYGVIGQSGAGKSSLIRCVNLLERPTSGTVTVAGQDLTALAGRGRRASAELRRARTRIGMVFQHFNLLGSRTVLDNVELPLEILGVSGRDRTRKAGELLDLVGLADKAKAYPGQLSGGQKQRVGIARALAGDPQVLLSDEATSALDPETTRSILQLLRDLNQQLGLTVLLITHEMDVVKTVCDSAALMRRGRIVESGTVAELLATPGSELAHELFPVGGTASGPDRTVVDVTFQGESASRPVISQLSRTYNIDISILGAAMDTVGGRQIGRMRIELPGRFEENVVPIGFLREQGLQAEVVEDETGPQAATVVPEQTPAALTKEVVK.

The ABC transporter domain maps to 2–247 (ITTTGLTKVY…PGSELAHELF (246 aa)). Position 38–45 (38–45 (GQSGAGKS)) interacts with ATP.

This sequence belongs to the ABC transporter superfamily. Methionine importer (TC 3.A.1.24) family. The complex is composed of two ATP-binding proteins (MetN), two transmembrane proteins (MetI) and a solute-binding protein (MetQ).

It is found in the cell membrane. The catalysed reaction is L-methionine(out) + ATP + H2O = L-methionine(in) + ADP + phosphate + H(+). It catalyses the reaction D-methionine(out) + ATP + H2O = D-methionine(in) + ADP + phosphate + H(+). Functionally, part of the ABC transporter complex MetNIQ involved in methionine import. Responsible for energy coupling to the transport system. The protein is Methionine import ATP-binding protein MetN of Streptomyces griseus.